Consider the following 209-residue polypeptide: Imidazole glycerol phosphate synthase subunit HisH (209 aa).

The Glutamine amidotransferase type-1 domain occupies 1 to 205 (MIAIIDYGMG…KGVVESWKSS (205 aa)). C79 serves as the catalytic Nucleophile. Residues H180 and E182 contribute to the active site.

Heterodimer of HisH and HisF.

The protein resides in the cytoplasm. The catalysed reaction is 5-[(5-phospho-1-deoxy-D-ribulos-1-ylimino)methylamino]-1-(5-phospho-beta-D-ribosyl)imidazole-4-carboxamide + L-glutamine = D-erythro-1-(imidazol-4-yl)glycerol 3-phosphate + 5-amino-1-(5-phospho-beta-D-ribosyl)imidazole-4-carboxamide + L-glutamate + H(+). It catalyses the reaction L-glutamine + H2O = L-glutamate + NH4(+). The protein operates within amino-acid biosynthesis; L-histidine biosynthesis; L-histidine from 5-phospho-alpha-D-ribose 1-diphosphate: step 5/9. IGPS catalyzes the conversion of PRFAR and glutamine to IGP, AICAR and glutamate. The HisH subunit catalyzes the hydrolysis of glutamine to glutamate and ammonia as part of the synthesis of IGP and AICAR. The resulting ammonia molecule is channeled to the active site of HisF. This is Imidazole glycerol phosphate synthase subunit HisH from Bacillus cereus (strain ATCC 10987 / NRS 248).